Reading from the N-terminus, the 395-residue chain is 1-deoxy-D-xylulose 5-phosphate reductoisomerase (395 aa).

Thr15, Gly16, Ser17, Ile18, Gly41, Asn43, and Asn126 together coordinate NADPH. Position 127 (Lys127) interacts with 1-deoxy-D-xylulose 5-phosphate. Glu128 is a binding site for NADPH. Asp152 contacts Mn(2+). The 1-deoxy-D-xylulose 5-phosphate site is built by Ser153, Glu154, Ser178, and His201. Mn(2+) is bound at residue Glu154. Gly207 is an NADPH binding site. Residues Ser214, Asn219, Lys220, and Glu223 each contribute to the 1-deoxy-D-xylulose 5-phosphate site. Glu223 contributes to the Mn(2+) binding site.

It belongs to the DXR family. Mg(2+) serves as cofactor. Mn(2+) is required as a cofactor.

The enzyme catalyses 2-C-methyl-D-erythritol 4-phosphate + NADP(+) = 1-deoxy-D-xylulose 5-phosphate + NADPH + H(+). It participates in isoprenoid biosynthesis; isopentenyl diphosphate biosynthesis via DXP pathway; isopentenyl diphosphate from 1-deoxy-D-xylulose 5-phosphate: step 1/6. Functionally, catalyzes the NADPH-dependent rearrangement and reduction of 1-deoxy-D-xylulose-5-phosphate (DXP) to 2-C-methyl-D-erythritol 4-phosphate (MEP). This chain is 1-deoxy-D-xylulose 5-phosphate reductoisomerase, found in Ruegeria pomeroyi (strain ATCC 700808 / DSM 15171 / DSS-3) (Silicibacter pomeroyi).